The chain runs to 479 residues: Calcium-dependent mitochondrial ATP-magnesium/phosphate carrier protein 3 (479 aa).

The Mitochondrial intermembrane portion of the chain corresponds to 1-208; it reads MESSKPKNRN…ISKHVKRSRL (208 aa). 4 EF-hand domains span residues 33–68, 69–104, 105–135, and 136–171; these read EREI…LQIP, PEYK…KELE, LYRI…AGIE, and IDDE…YPHE. Positions 82, 84, 86, 88, and 93 each coordinate Ca(2+). Residues Asp149, Asp151, Asn153, Thr155, and Glu160 each coordinate Ca(2+). Solcar repeat units lie at residues 203-286, 294-381, and 392-475; these read VKRS…LKPM, IGTS…LKDL, and PGPL…MKKN. Residues 209 to 226 traverse the membrane as a helical segment; it reads LLAGGLAGAVSRTATAPL. Over 227–260 the chain is Mitochondrial matrix; that stretch reads DRLKVVLQVQRAHAGVLPTIKKIWREDKLMGFFR. The chain crosses the membrane as a helical span at residues 261–280; it reads GNGLNVMKVAPESAIKFCAY. The Mitochondrial intermembrane portion of the chain corresponds to 281–303; the sequence is EMLKPMIGGEDGDIGTSGRLMAG. Residues 304-317 form a helical membrane-spanning segment; the sequence is GMAGALAQTAIYPM. Residues 318–355 are Mitochondrial matrix-facing; that stretch reads DLVKTRLQTCVSEGGKAPKLWKLTKDIWVREGPRAFYK. Residues 356–375 form a helical membrane-spanning segment; that stretch reads GLFPSLLGIVPYAGIDLAAY. The Mitochondrial intermembrane segment spans residues 376–397; the sequence is ETLKDLSRTYILQDTEPGPLIQ. Residues 398 to 415 form a helical membrane-spanning segment; it reads LSCGMTSGALGASCVYPL. The Mitochondrial matrix portion of the chain corresponds to 416–449; that stretch reads QVVRTRMQADSSKTTMKQEFMNTMKGEGLRGFYR. A helical transmembrane segment spans residues 450-469; it reads GLLPNLLKVVPAASITYIVY. The Mitochondrial intermembrane segment spans residues 470–479; sequence EAMKKNMALD.

Belongs to the mitochondrial carrier (TC 2.A.29) family. In terms of tissue distribution, expressed in flowers, leaves, stems, roots and seedlings, mostly in seedlings.

Its subcellular location is the mitochondrion inner membrane. Counter-exchange transport activity is saturable and inhibited by pyridoxal-5'-phosphate, EDTA and EGTA. Activated by calcium Ca(2+) and manganese Mn(2+) ions, and slightly by iron Fe(2+) and zinc Zn(2+) ions. Repressed by copper ions Cu(2+) and slightly by magnesium Mg(2+) ions. Magnesium Mg(2+) ions promotes slightly ATP uptake, ATP-Mg(2+) being exchanged with ATP(4-). Calcium-dependent mitochondrial carrier protein that catalyzes the import of ATP co-transported with metal divalent cations across the mitochondrial inner membrane in exchange for phosphate (Pi). Can transport phosphate, AMP, ADP, ATP, adenosine 5'-phosphosulfate, sulfate and thiosulfate, and, to a lesser extent, other nucleotides. Binds calcium ions Ca(2+). Also mediates calcium uptake. This chain is Calcium-dependent mitochondrial ATP-magnesium/phosphate carrier protein 3, found in Arabidopsis thaliana (Mouse-ear cress).